The primary structure comprises 483 residues: ATP synthase subunit beta, chloroplastic (483 aa).

163 to 170 (GGAGVGKT) provides a ligand contact to ATP.

Belongs to the ATPase alpha/beta chains family. In terms of assembly, F-type ATPases have 2 components, CF(1) - the catalytic core - and CF(0) - the membrane proton channel. CF(1) has five subunits: alpha(3), beta(3), gamma(1), delta(1), epsilon(1). CF(0) has four main subunits: a(1), b(1), b'(1) and c(9-12).

It is found in the plastid. The protein localises to the chloroplast thylakoid membrane. The enzyme catalyses ATP + H2O + 4 H(+)(in) = ADP + phosphate + 5 H(+)(out). Produces ATP from ADP in the presence of a proton gradient across the membrane. The catalytic sites are hosted primarily by the beta subunits. The polypeptide is ATP synthase subunit beta, chloroplastic (Ostreococcus tauri).